Consider the following 358-residue polypeptide: Purine permease 2 (358 aa).

10 helical membrane-spanning segments follow: residues Val-6–Met-26, Ile-37–Leu-57, Phe-74–Phe-94, Thr-110–Val-130, Phe-134–Leu-154, Val-170–Val-190, Phe-209–Gly-229, Val-262–Phe-282, Val-288–Phe-308, and Phe-312–Tyr-332. Residues Val-46–Leu-154 form the EamA domain.

Belongs to the purine permeases (TC 2.A.7.14) family. In terms of tissue distribution, expressed in the vascular system of leaves. Restricted to the phloem. Expressed in flowers and roots and not detected in stems.

Its subcellular location is the membrane. Competitive inhibition of adenine transport by isopentenyladenine, kinetin, benzylaminopurine, trans- and cis-zeatin and trans-zeatin riboside. In terms of biological role, mediates adenine transport. May be involved in the uptake of cytokinin analogs. The polypeptide is Purine permease 2 (PUP2) (Arabidopsis thaliana (Mouse-ear cress)).